The sequence spans 246 residues: Zorya protein ZorB (246 aa).

A helical transmembrane segment spans residues 20 to 40; it reads FWISYADLMTAMMVLFLVVMV. An OmpA-like domain is found at 86-218; it reads CHDNRISFGE…RVELRMQFFG (133 aa).

It belongs to the MotB family.

It localises to the cell inner membrane. Functionally, component of antiviral defense system Zorya type I, composed of ZorA, ZorB, ZorC and ZorD. Expression of Zorya type I in E.coli (strain MG1655) confers 10,000-fold resistance to phage SECphi27, 100-fold resistance to lambda, and 10-fold resistance to T7. While most T7 infected Zorya-containing cells undergo abortive infection, a minority produce viable phage progeny. These eventually accumulate to a high multiplicity of infection, leading to culture collapse by 2 hours after initial infection. ZorA and ZorB probably assemble in the cell inner membrane and exert their effect there. This Escherichia coli O139:H28 (strain E24377A / ETEC) protein is Zorya protein ZorB.